A 706-amino-acid chain; its full sequence is Probable N(6)-adenosine-methyltransferase MT-A70-like (706 aa).

Disordered regions lie at residues 64–114 (RPFV…VAAA) and 223–261 (TLPL…PDMW). A compositionally biased stretch (low complexity) spans 103–114 (SPGSSPASVAAA). A compositionally biased stretch (pro residues) spans 227–236 (LQPPPAPQMP). S-adenosyl-L-methionine-binding positions include 479–480 (DI) and Asp-497. Residues 567–580 (RIIRTGRTGHWLNH) are positively charged region required for RNA-binding. Residues Lys-614, 637–640 (RMHN), and 650–651 (NQ) contribute to the S-adenosyl-L-methionine site. The interval 669-706 (AYPDSEVQPPSPPRASAPIDGDQGTSQKPTVSDGERPA) is disordered.

It belongs to the MT-A70-like family.

Its subcellular location is the nucleus. It catalyses the reaction an adenosine in mRNA + S-adenosyl-L-methionine = an N(6)-methyladenosine in mRNA + S-adenosyl-L-homocysteine + H(+). Functionally, probable N6-methyltransferase that methylates adenosine residues of some mRNAs. N6-methyladenosine (m6A), which is present at internal sites of some mRNAs, may play a role in the efficiency of mRNA splicing, transport or translation. The sequence is that of Probable N(6)-adenosine-methyltransferase MT-A70-like from Oryza sativa subsp. japonica (Rice).